Here is a 295-residue protein sequence, read N- to C-terminus: Probable endonuclease lcl3 (295 aa).

The segment at 1-35 (MRWPPWASDSQAQQQTAKHDEHDERQAAAKSTTTS) is disordered. The span at 17–27 (AKHDEHDERQA) shows a compositional bias: basic and acidic residues. Residues 52 to 74 (FTEARTIIPTLILTSGFLGAFYI) traverse the membrane as a helical segment. Residues 96–263 (RSLLGQVTSV…KLRGVGLWKD (168 aa)) enclose the TNase-like domain. The active site involves Arg147. Asp152 contacts Ca(2+). Residues Glu155 and Arg195 contribute to the active site.

It belongs to the LCL3 family.

Its subcellular location is the mitochondrion. The protein localises to the membrane. This Neosartorya fischeri (strain ATCC 1020 / DSM 3700 / CBS 544.65 / FGSC A1164 / JCM 1740 / NRRL 181 / WB 181) (Aspergillus fischerianus) protein is Probable endonuclease lcl3 (lcl3).